A 308-amino-acid chain; its full sequence is Porphobilinogen deaminase (308 aa).

The residue at position 241 (C241) is an S-(dipyrrolylmethanemethyl)cysteine.

Belongs to the HMBS family. In terms of assembly, monomer. Dipyrromethane is required as a cofactor.

It carries out the reaction 4 porphobilinogen + H2O = hydroxymethylbilane + 4 NH4(+). It participates in porphyrin-containing compound metabolism; protoporphyrin-IX biosynthesis; coproporphyrinogen-III from 5-aminolevulinate: step 2/4. Its function is as follows. Tetrapolymerization of the monopyrrole PBG into the hydroxymethylbilane pre-uroporphyrinogen in several discrete steps. This chain is Porphobilinogen deaminase, found in Staphylococcus carnosus (strain TM300).